The chain runs to 206 residues: uncharacterized protein (206 aa).

It localises to the plastid. The protein resides in the cyanelle. This is an uncharacterized protein from Cyanophora paradoxa.